A 354-amino-acid polypeptide reads, in one-letter code: Protein FAM181A (354 aa).

Basic and acidic residues-rich tracts occupy residues 1 to 14 (MPLEERRSSGERND) and 129 to 142 (YLKRGSEDRPRRLL). Disordered regions lie at residues 1 to 35 (MPLEERRSSGERNDAAPTNHRRPGEKRASTAKQVS), 117 to 160 (LPRG…CKEK), and 172 to 193 (AKEQLPQRQHPEAAQPGQVPMR).

This sequence belongs to the FAM181 family.

In Homo sapiens (Human), this protein is Protein FAM181A (FAM181A).